The chain runs to 100 residues: Double-stranded DNA-binding protein (100 aa).

A DNA-binding region spans residues 1–19 (MRKMMQREVTYTTAQLARM).

In terms of assembly, homodimer. Homomultimer. Binds to double-stranded DNA giving rise to multimeric nucleoprotein complexes.

Histone-like nucleoprotein that binds to the viral dsDNA and responsible for wrapping and condensing the viral DNA about 4-fold. Forms a nucleoprotein complex in which the DNA adopts a right-handed toroidal conformation winding around a protein core. Binding specificity for the viral genome is based on supercoiling. The formation of the nucleoprotein complex at the genome ends, for which the binding affinity is highest, activates the initiation of viral DNA replication. The binding of p6 would recruit the complex formed by the TP and the DNA polymerase to the origin. Protein p6 is also involved in the early to late transcription switch. The polypeptide is Double-stranded DNA-binding protein (Bacillus phage Nf (Bacteriophage Nf)).